The chain runs to 499 residues: uncharacterized protein (499 aa).

This is an uncharacterized protein from Methanothermobacter thermautotrophicus (Methanobacterium thermoformicicum).